Reading from the N-terminus, the 173-residue chain is MNLILVGFMGSGKTTVSTLLGEALQQPVYDLDDEVEKAACKPIPQIFADDGEASFRDLEHSALKEVVKRRQGILATGGGTPVAERNQRLLEHAQAPVILLTASPAETARRLGDGEGRPLASKLTPAELADLQDARRPAYDRCADLTIRTDKLSPTAVAKLIIAFLRIHQDQSA.

10–15 (GSGKTT) is a binding site for ATP. Mg(2+) is bound at residue Thr-14. Substrate-binding residues include Asp-32, Arg-56, and Gly-78. ATP is bound at residue Arg-117. Residue Arg-135 participates in substrate binding.

Belongs to the shikimate kinase family. As to quaternary structure, monomer. The cofactor is Mg(2+).

It localises to the cytoplasm. It catalyses the reaction shikimate + ATP = 3-phosphoshikimate + ADP + H(+). Its pathway is metabolic intermediate biosynthesis; chorismate biosynthesis; chorismate from D-erythrose 4-phosphate and phosphoenolpyruvate: step 5/7. Functionally, catalyzes the specific phosphorylation of the 3-hydroxyl group of shikimic acid using ATP as a cosubstrate. In Limosilactobacillus fermentum (strain NBRC 3956 / LMG 18251) (Lactobacillus fermentum), this protein is Shikimate kinase.